We begin with the raw amino-acid sequence, 549 residues long: Urocanate hydratase (549 aa).

NAD(+)-binding positions include 46 to 47 (GG), Gln-124, Glu-190, Arg-195, 236 to 237 (NA), 257 to 261 (QTSAH), 267 to 268 (YV), and Tyr-316. Cys-404 is a catalytic residue. Residue Gly-486 participates in NAD(+) binding.

It belongs to the urocanase family. NAD(+) serves as cofactor.

Its subcellular location is the cytoplasm. The enzyme catalyses 4-imidazolone-5-propanoate = trans-urocanate + H2O. Its pathway is amino-acid degradation; L-histidine degradation into L-glutamate; N-formimidoyl-L-glutamate from L-histidine: step 2/3. Its function is as follows. Catalyzes the conversion of urocanate to 4-imidazolone-5-propionate. In Thermoanaerobacter pseudethanolicus (strain ATCC 33223 / 39E) (Clostridium thermohydrosulfuricum), this protein is Urocanate hydratase.